Here is a 429-residue protein sequence, read N- to C-terminus: Adenylosuccinate synthetase (429 aa).

GTP contacts are provided by residues 12–18 (GDEGKGK) and 40–42 (GHT). Aspartate 13 functions as the Proton acceptor in the catalytic mechanism. Aspartate 13 and glycine 40 together coordinate Mg(2+). IMP is bound by residues 13-16 (DEGK), 38-41 (NAGH), threonine 129, arginine 143, glutamine 223, threonine 238, and arginine 302. Residue histidine 41 is the Proton donor of the active site. 298–304 (TVTGRPR) contacts substrate. Residues arginine 304, 330-332 (KLD), and 412-414 (STS) each bind GTP.

This sequence belongs to the adenylosuccinate synthetase family. Homodimer. Mg(2+) is required as a cofactor.

It localises to the cytoplasm. It carries out the reaction IMP + L-aspartate + GTP = N(6)-(1,2-dicarboxyethyl)-AMP + GDP + phosphate + 2 H(+). It functions in the pathway purine metabolism; AMP biosynthesis via de novo pathway; AMP from IMP: step 1/2. In terms of biological role, plays an important role in the de novo pathway of purine nucleotide biosynthesis. Catalyzes the first committed step in the biosynthesis of AMP from IMP. In Rhodospirillum rubrum (strain ATCC 11170 / ATH 1.1.1 / DSM 467 / LMG 4362 / NCIMB 8255 / S1), this protein is Adenylosuccinate synthetase.